The chain runs to 483 residues: Glycogen synthase (483 aa).

Position 15 (K15) interacts with ADP-alpha-D-glucose.

It belongs to the glycosyltransferase 1 family. Bacterial/plant glycogen synthase subfamily.

The catalysed reaction is [(1-&gt;4)-alpha-D-glucosyl](n) + ADP-alpha-D-glucose = [(1-&gt;4)-alpha-D-glucosyl](n+1) + ADP + H(+). It participates in glycan biosynthesis; glycogen biosynthesis. Functionally, synthesizes alpha-1,4-glucan chains using ADP-glucose. This Thioalkalivibrio sulfidiphilus (strain HL-EbGR7) protein is Glycogen synthase.